The following is an 82-amino-acid chain: Small ribosomal subunit protein uS17 (82 aa).

The protein belongs to the universal ribosomal protein uS17 family. In terms of assembly, part of the 30S ribosomal subunit.

In terms of biological role, one of the primary rRNA binding proteins, it binds specifically to the 5'-end of 16S ribosomal RNA. This Xanthobacter autotrophicus (strain ATCC BAA-1158 / Py2) protein is Small ribosomal subunit protein uS17.